The chain runs to 455 residues: uncharacterized protein (455 aa).

A run of 11 helical transmembrane segments spans residues 26–46 (FGPG…QLLI), 53–73 (GAWG…ISIG), 77–97 (LGVM…RSTA), 111–131 (WVVA…LAVI), 146–166 (ALRA…TGVW), 191–211 (AAGV…SLVV), 232–252 (LTVL…AIAV), 256–276 (AHIG…IPAL), 278–298 (ILAA…LIVG), 323–343 (LLVA…GGGG), and 357–377 (ALVL…VVIA). Residues 384-455 (PKRLRPAPPV…LSDEPPPRAD (72 aa)) form a disordered region.

It is found in the cell membrane. This is an uncharacterized protein from Mycobacterium tuberculosis (strain CDC 1551 / Oshkosh).